The primary structure comprises 415 residues: MNNSKTNQQMNTSMGYPLTVYDECNKFQLIVPTLDANIMLWCIGQLSLLNDSNGCKHLFWQPNDKSNVRILLNNYDYGHLFKYLQCQRKCSVYIGEGTLKKYNLTISTSFDNFLDLTPSEEKESLCREDAHEDPVSPKAGSEEEISPNSTSNVVVSRECLDNFMKQLLKLEESLNKLELEQKVTNKEPNHRISGTIDIPEDRSELVNFFTELKTVKQLEDVFQRYHDYERLSQECDSKTEIASDHSKKETKIEVEPPNERSLQITMDQRDNSLYFQLFNNTNSVLAGNCKLKFTDAGDKPTTQIIDMGPHEIGIKEYKEYRYFPYALDLEAGSTIEIENQYGEVIFLGKYGSSPMINLRPPSRLSAESLQASQEPFYSFQIDTLPELDDSSIISTSISLSYDGDDNEKALTWEEL.

The interval 21 to 28 is ATG11-binding; the sequence is YDECNKFQ. Residues 126–135 show a composition bias toward basic and acidic residues; the sequence is CREDAHEDPV. The segment at 126–150 is disordered; that stretch reads CREDAHEDPVSPKAGSEEEISPNST. S136 and S141 each carry phosphoserine. Residues 157–187 are a coiled coil; that stretch reads RECLDNFMKQLLKLEESLNKLELEQKVTNKE. Residues K213 and K216 each participate in a glycyl lysine isopeptide (Lys-Gly) (interchain with G-Cter in ubiquitin) cross-link. The residue at position 243 (S243) is a Phosphoserine. The AMS1-binding stretch occupies residues 254–367; it reads VEPPNERSLQ…LRPPSRLSAE (114 aa). The tract at residues 406-415 is ATG8-binding; that stretch reads NEKALTWEEL. The short motif at 412–415 is the WXXL element; that stretch reads WEEL.

Interacts with the vacuolar aminopeptidase 1 (LAP4) precursor and mature forms. Also interacts with AMS1, APE4, ATG8 ATG11, and UBP3. Post-translationally, polyubiquitinated at Lys-213 and Lys-216. Deubiquitination by UBP3 is required for full activity of ATG19.

The protein resides in the preautophagosomal structure membrane. In terms of biological role, cargo-receptor protein involved in the cytoplasm to vacuole transport (Cvt) and in autophagy. Recognizes cargo proteins, such as APE4, LAP3, LAP4 and AMS1 and delivers them to the pre-autophagosomal structure for eventual engulfment by the autophagosome and targeting to the vacuole. Involved in the organization of the preautophagosomal structure (PAS). ATG19 association with cargo protein is required to localize ATG11 to the PAS. Also involved in endoplasmic reticulum-specific autophagic process, in selective removal of ER-associated degradation (ERAD) substrates, and is essential for the survival of cells subjected to severe ER stress. Also plays a role in regulation of filamentous growth. The chain is Autophagy-related protein 19 (ATG19) from Saccharomyces cerevisiae (strain YJM789) (Baker's yeast).